The chain runs to 379 residues: Probable pectin lyase B (379 aa).

An N-terminal signal peptide occupies residues 1–20 (MHYKLLFAAAAASLASAVSA). Cystine bridges form between Cys-83–Cys-102 and Cys-92–Cys-226. Residues Asn-129 and Asn-252 are each glycosylated (N-linked (GlcNAc...) asparagine). Arg-256 is a catalytic residue. Cys-323 and Cys-331 are disulfide-bonded.

This sequence belongs to the polysaccharide lyase 1 family.

The protein localises to the secreted. The enzyme catalyses Eliminative cleavage of (1-&gt;4)-alpha-D-galacturonan methyl ester to give oligosaccharides with 4-deoxy-6-O-methyl-alpha-D-galact-4-enuronosyl groups at their non-reducing ends.. Its function is as follows. Pectinolytic enzymes consist of four classes of enzymes: pectin lyase, polygalacturonase, pectin methylesterase and rhamnogalacturonase. Among pectinolytic enzymes, pectin lyase is the most important in depolymerization of pectin, since it cleaves internal glycosidic bonds of highly methylated pectins. In Aspergillus niger (strain ATCC MYA-4892 / CBS 513.88 / FGSC A1513), this protein is Probable pectin lyase B (pelB).